The sequence spans 260 residues: MGRPPPCAIQPWILLLLFMGAWAGLTRAQGSKILEGRECIPHSQPWQAALFQGERLICGGVLVGDRWVLTAAHCKKQKYSVRLGDHSLQSRDQPEQEIQVAQSIQHPCYNNSNPEDHSHDIMLIRLQNSANLGDKVKPVQLANLCPKVGQKCIISGWGTVTSPQENFPNTLNCAEVKIYSQNKCERAYPGKITEGMVCAGSSNGADTCQGDSGGPLVCDGMLQGITSWGSDPCGKPEKPGVYTKICRYTTWIKKTMDNRD.

The N-terminal stretch at 1-28 is a signal peptide; the sequence is MGRPPPCAIQPWILLLLFMGAWAGLTRA. A propeptide spanning residues 29 to 32 is cleaved from the precursor; the sequence is QGSK. Residues 33–257 enclose the Peptidase S1 domain; sequence ILEGRECIPH…YTTWIKKTMD (225 aa). 6 disulfide bridges follow: cysteine 39–cysteine 173, cysteine 58–cysteine 74, cysteine 145–cysteine 246, cysteine 152–cysteine 218, cysteine 184–cysteine 198, and cysteine 208–cysteine 233. The Charge relay system role is filled by histidine 73. Asparagine 110 is a glycosylation site (N-linked (GlcNAc...) asparagine). Aspartate 120 serves as the catalytic Charge relay system. Serine 212 (charge relay system) is an active-site residue.

This sequence belongs to the peptidase S1 family. Kallikrein subfamily. As to quaternary structure, interacts with SPINK9. As to expression, expressed in the limbic system of mouse brain and is localized at highest concentration in pyramidal neurons of the hippocampal CA1-3 subfields. Also detected in spinal cord gray matter and in keratinized stratified epithelia of epidermis, hair, tongue, palate, nasal cavity, pharynges, esophagus and forestomach. In skin and mucus membranes, expressed in stratum spinosum and stratum granulosum. Expressed during estrus in vaginal epithelial cells but not stromal cells. Within the vaginal epithelium, expressed in prickle cells, granular cells and parakeratotic cells but not in basal cells. Not expressed in uterus. Expressed in the keratinocytes.

It localises to the secreted. The protein localises to the cytoplasm. It carries out the reaction Cleavage of amide substrates following the basic amino acids Arg or Lys at the P1 position, with a preference for Arg over Lys.. Its activity is regulated as follows. Strongly inhibited by diisopropyl fluorophosphate, leupeptin and (4-amidinophenyl)methanesulfonyl 1-fluoride. In terms of biological role, serine protease which is capable of degrading a number of proteins such as casein, fibrinogen, kininogen, fibronectin and collagen type IV. Also cleaves L1CAM in response to increased neural activity. Induces neurite outgrowth and fasciculation of cultured hippocampal neurons. Plays a role in the formation and maturation of orphan and small synaptic boutons in the Schaffer-collateral pathway, regulates Schaffer-collateral long-term potentiation in the hippocampus and is required for memory acquisition and synaptic plasticity. Involved in skin desquamation and keratinocyte proliferation. Plays a role in the secondary phase of pathogenesis following spinal cord injury. The chain is Kallikrein-8 (Klk8) from Mus musculus (Mouse).